The chain runs to 293 residues: Undecaprenyl-diphosphatase (293 aa).

Transmembrane regions (helical) follow at residues 107–127 (WMIIVATIPVVVLGVLGKDLI), 134–154 (MWITATVLVLFSFVFILAEKV), 207–227 (FSFLLAIPAVLGSGLYSLPDA), 243–263 (IGTLVAFLVGYASIAWLMKFV), and 268–288 (FSWFAAYRIPAGLLVMLLLWL).

It belongs to the UppP family.

Its subcellular location is the cell membrane. The enzyme catalyses di-trans,octa-cis-undecaprenyl diphosphate + H2O = di-trans,octa-cis-undecaprenyl phosphate + phosphate + H(+). Catalyzes the dephosphorylation of undecaprenyl diphosphate (UPP). Confers resistance to bacitracin. This chain is Undecaprenyl-diphosphatase, found in Corynebacterium efficiens (strain DSM 44549 / YS-314 / AJ 12310 / JCM 11189 / NBRC 100395).